Here is a 671-residue protein sequence, read N- to C-terminus: UvrABC system protein B (671 aa).

A Helicase ATP-binding domain is found at 25-412 (EGIDAGLAHQ…AGRVVEQVVR (388 aa)). 38-45 (GVTGSGKT) provides a ligand contact to ATP. Residues 91–114 (YYDYYQPEAYVPSSDTFIEKDASI) carry the Beta-hairpin motif. The Helicase C-terminal domain occupies 429–595 (QVDDLLSEIH…GVFKDVADIM (167 aa)). The disordered stretch occupies residues 600-624 (VPGSRSKKRKGMAKAAEENARYENE). The segment covering 614–624 (AAEENARYENE) has biased composition (basic and acidic residues). A UVR domain is found at 632 to 667 (NKRIRQLEEKMYQLARDLEFEAAAQMRDEIGKLRER).

This sequence belongs to the UvrB family. As to quaternary structure, forms a heterotetramer with UvrA during the search for lesions. Interacts with UvrC in an incision complex.

The protein resides in the cytoplasm. Its function is as follows. The UvrABC repair system catalyzes the recognition and processing of DNA lesions. A damage recognition complex composed of 2 UvrA and 2 UvrB subunits scans DNA for abnormalities. Upon binding of the UvrA(2)B(2) complex to a putative damaged site, the DNA wraps around one UvrB monomer. DNA wrap is dependent on ATP binding by UvrB and probably causes local melting of the DNA helix, facilitating insertion of UvrB beta-hairpin between the DNA strands. Then UvrB probes one DNA strand for the presence of a lesion. If a lesion is found the UvrA subunits dissociate and the UvrB-DNA preincision complex is formed. This complex is subsequently bound by UvrC and the second UvrB is released. If no lesion is found, the DNA wraps around the other UvrB subunit that will check the other stand for damage. This Pseudomonas savastanoi pv. phaseolicola (strain 1448A / Race 6) (Pseudomonas syringae pv. phaseolicola (strain 1448A / Race 6)) protein is UvrABC system protein B.